A 465-amino-acid chain; its full sequence is ATP synthase subunit beta (465 aa).

152 to 159 provides a ligand contact to ATP; the sequence is GGAGVGKT.

This sequence belongs to the ATPase alpha/beta chains family. F-type ATPases have 2 components, CF(1) - the catalytic core - and CF(0) - the membrane proton channel. CF(1) has five subunits: alpha(3), beta(3), gamma(1), delta(1), epsilon(1). CF(0) has three main subunits: a(1), b(2) and c(9-12). The alpha and beta chains form an alternating ring which encloses part of the gamma chain. CF(1) is attached to CF(0) by a central stalk formed by the gamma and epsilon chains, while a peripheral stalk is formed by the delta and b chains.

The protein localises to the cell inner membrane. The enzyme catalyses ATP + H2O + 4 H(+)(in) = ADP + phosphate + 5 H(+)(out). Functionally, produces ATP from ADP in the presence of a proton gradient across the membrane. The catalytic sites are hosted primarily by the beta subunits. The protein is ATP synthase subunit beta of Campylobacter jejuni subsp. jejuni serotype O:6 (strain 81116 / NCTC 11828).